We begin with the raw amino-acid sequence, 253 residues long: RNA polymerase sigma-F factor (253 aa).

Residues 61-74 (DLFQIGCIGLLKSV) carry the Polymerase core binding motif. Positions 221–240 (QSEVAARLGISQVQVSRLEK) form a DNA-binding region, H-T-H motif.

Belongs to the sigma-70 factor family.

Functionally, sigma factors are initiation factors that promote the attachment of RNA polymerase to specific initiation sites and are then released. This sigma factor is responsible for the expression of sporulation specific genes. It is responsible for directing gene expression in the forespore compartment of developing cells of Bacillus. This chain is RNA polymerase sigma-F factor (sigF), found in Priestia megaterium (Bacillus megaterium).